A 227-amino-acid chain; its full sequence is Cytidylate kinase (227 aa).

12–20 (GPSGAGKGT) contacts ATP.

Belongs to the cytidylate kinase family. Type 1 subfamily.

The protein resides in the cytoplasm. The enzyme catalyses CMP + ATP = CDP + ADP. It catalyses the reaction dCMP + ATP = dCDP + ADP. The polypeptide is Cytidylate kinase (Citrobacter koseri (strain ATCC BAA-895 / CDC 4225-83 / SGSC4696)).